A 339-amino-acid chain; its full sequence is UPF0324 membrane protein spyM18_1033 (339 aa).

The next 9 membrane-spanning stretches (helical) occupy residues 7-24, 28-50, 57-79, 84-106, 118-140, 150-172, 256-275, 290-307, and 314-336; these read KLPG…AWYL, FPII…FYGH, GISF…GLNL, AVGM…VAYG, ATLV…APVI, AISV…GQLL, FILF…SFGV, FIVM…LVKL, and AILL…QLSL.

Belongs to the UPF0324 family.

It localises to the cell membrane. The chain is UPF0324 membrane protein spyM18_1033 from Streptococcus pyogenes serotype M18 (strain MGAS8232).